Reading from the N-terminus, the 207-residue chain is Large ribosomal subunit protein uL4 (207 aa).

Residues 48-70 (KAQKTRSEVSGGGAKPWRQKGTG) are disordered.

It belongs to the universal ribosomal protein uL4 family. As to quaternary structure, part of the 50S ribosomal subunit.

One of the primary rRNA binding proteins, this protein initially binds near the 5'-end of the 23S rRNA. It is important during the early stages of 50S assembly. It makes multiple contacts with different domains of the 23S rRNA in the assembled 50S subunit and ribosome. Functionally, forms part of the polypeptide exit tunnel. The polypeptide is Large ribosomal subunit protein uL4 (Francisella tularensis subsp. mediasiatica (strain FSC147)).